The following is a 119-amino-acid chain: Large ribosomal subunit protein uL18 (119 aa).

Belongs to the universal ribosomal protein uL18 family. As to quaternary structure, part of the 50S ribosomal subunit; part of the 5S rRNA/L5/L18/L25 subcomplex. Contacts the 5S and 23S rRNAs.

In terms of biological role, this is one of the proteins that bind and probably mediate the attachment of the 5S RNA into the large ribosomal subunit, where it forms part of the central protuberance. In Cereibacter sphaeroides (strain ATCC 17029 / ATH 2.4.9) (Rhodobacter sphaeroides), this protein is Large ribosomal subunit protein uL18.